The following is a 135-amino-acid chain: Small ribosomal subunit protein bS16 (135 aa).

Residues 82–135 (RPAETVGKAKQAAKREADAKQAAKEAAEAKAAAADEKAAEAEASDSAESESTEG) are disordered. Residues 94–121 (AKREADAKQAAKEAAEAKAAAADEKAAE) show a composition bias toward basic and acidic residues. Acidic residues predominate over residues 123 to 135 (EASDSAESESTEG).

The protein belongs to the bacterial ribosomal protein bS16 family.

In Synechococcus sp. (strain CC9605), this protein is Small ribosomal subunit protein bS16.